The sequence spans 935 residues: Isoleucine--tRNA ligase (935 aa).

Positions 58-68 (PYANGSIHVGH) match the 'HIGH' region motif. Glu558 lines the L-isoleucyl-5'-AMP pocket. The short motif at 599–603 (KMSKS) is the 'KMSKS' region element. Lys602 contacts ATP. Zn(2+) contacts are provided by Cys897, Cys900, Cys917, and Cys920.

It belongs to the class-I aminoacyl-tRNA synthetase family. IleS type 1 subfamily. As to quaternary structure, monomer. Zn(2+) serves as cofactor.

The protein resides in the cytoplasm. The enzyme catalyses tRNA(Ile) + L-isoleucine + ATP = L-isoleucyl-tRNA(Ile) + AMP + diphosphate. In terms of biological role, catalyzes the attachment of isoleucine to tRNA(Ile). As IleRS can inadvertently accommodate and process structurally similar amino acids such as valine, to avoid such errors it has two additional distinct tRNA(Ile)-dependent editing activities. One activity is designated as 'pretransfer' editing and involves the hydrolysis of activated Val-AMP. The other activity is designated 'posttransfer' editing and involves deacylation of mischarged Val-tRNA(Ile). This chain is Isoleucine--tRNA ligase, found in Francisella tularensis subsp. mediasiatica (strain FSC147).